The primary structure comprises 344 residues: Axoneme-associated protein mst101(1) (344 aa).

Repeat copies occupy residues 74-89 (KKKC…EAAE), 90-105 (KKKC…EAAE), 106-121 (KKKC…EAAE), 122-137 (KKKC…EAAE), 138-153 (KKKC…EAAE), 154-169 (KKKC…EAAE), 170-185 (KKKC…CAEL), 186-201 (AKKE…CAEA), 202-217 (AKKE…CEER), 218-233 (AKKE…CEER), 234-249 (AKKE…CAEA), and 250-265 (AKKE…CAEA). Residues 74–344 (KKKCAEAAKK…AAQKKCEPKK (271 aa)) form a 17 X 16 AA approximate tandem repeats of K-K-K-C-X-E-X-A-[KQ]-K-X-X-E-X-A-X region. Residues 206-244 (KEAAEKKKCEERAKKEKEAAEKKKCEERAKKEKEAAEKK) are disordered. The stretch at 266–281 (AQKKKCAELAKKAKEA) is one 13; approximate repeat. Residues 282–297 (AEKKKCAKKAGEKGSK) form a 14; approximate repeat. Over residues 285-315 (KKCAKKAGEKGSKQSGSDKGKKNGKKNDMKN) the composition is skewed to basic and acidic residues. The interval 285-318 (KKCAKKAGEKGSKQSGSDKGKKNGKKNDMKNKCA) is disordered. Residues 298-313 (QSGSDKGKKNGKKNDM) form a 15; approximate repeat. Copy 16 of the repeat occupies 314 to 329 (KNKCAMLAKKAKEEAL). A 17; truncated repeat occupies 330 to 344 (KKKCAAAQKKCEPKK).

In terms of tissue distribution, testis. Located in spermatocytes and spermatid bundles.

The protein resides in the cytoplasm. Functionally, possible structural role in the sperm tail. It is associated with axonemal structures. In Drosophila hydei (Fruit fly), this protein is Axoneme-associated protein mst101(1) (mst101(1)).